The following is a 451-amino-acid chain: Cobalamin reductase PduS (451 aa).

4Fe-4S ferredoxin-type domains follow at residues 255-284 and 300-330; these read TVLSVAKTVCEQCRLCTDLCPRHLIGHELS and PQLLLTALTCSECNVCESVACPVGISPMRIN. Residues cysteine 264, cysteine 267, cysteine 270, cysteine 274, cysteine 309, cysteine 312, cysteine 315, and cysteine 320 each coordinate [4Fe-4S] cluster.

This sequence belongs to the PduS cobalamin reductase family. In terms of assembly, monomer, forms a complex with PduO. Interacts with PduT, probably via the N-terminus of PduS. It depends on [4Fe-4S] cluster as a cofactor. FMN serves as cofactor.

The protein resides in the bacterial microcompartment. Its pathway is polyol metabolism; 1,2-propanediol degradation. Its function is as follows. A bifunctional cobalamin reductase that converts cob(III)alamin to cob(II)alamin and then to cob(I)alamin in the bacterial microcompartment (BMC) dedicated to 1,2-propanediol (1,2-PD) degradation. PduS and PduO allow regeneration of the adenosylcobalamin cofactor within the BMC. Cobalamin reduction probably occurs spontaneously in the presence of free reduced flavin nucleotides, this protein may be involved in electron transfer for this reduction. In terms of biological role, expression of a cosmid containing the full 21-gene pdu operon in E.coli allows E.coli to grow on 1,2-propanediol (1,2-PD) with the appearance of BMCs in its cytoplasm. The 1,2-PD-specific bacterial microcompartment (BMC) concentrates low levels of 1,2-PD catabolic enzymes, concentrates volatile reaction intermediates thus enhancing pathway flux and keeps the level of toxic, mutagenic propionaldehyde low. The protein is Cobalamin reductase PduS of Citrobacter freundii.